The chain runs to 73 residues: MAKCEICGKEPRAGKNVSHSNRHTNRWFKPNVQKVRVLLDDGTVKRMNVCTSCLKAGKVRRYVSKSQSVALEA.

It belongs to the bacterial ribosomal protein bL28 family.

This is Large ribosomal subunit protein bL28 from Fervidobacterium nodosum (strain ATCC 35602 / DSM 5306 / Rt17-B1).